The following is a 312-amino-acid chain: Very-long-chain 3-oxoacyl-CoA reductase (312 aa).

Residues 4 to 24 (ALPAAGFLYWVGAGTVAYLAL) traverse the membrane as a helical segment. 50 to 79 (GEWAVVTGSTDGIGKSYAEELAKHGMKVVL) contributes to the NADP(+) binding site. The next 2 helical transmembrane spans lie at 182-202 (GAILNISSGSGMLPVPLLTIY) and 271-291 (GYLIHALMGSIISNLPSWIYL). Position 189 (S189) interacts with substrate. Catalysis depends on Y202, which acts as the Proton acceptor. Residues 308–312 (KTKKN) carry the Di-lysine motif motif.

It belongs to the short-chain dehydrogenases/reductases (SDR) family. 17-beta-HSD 3 subfamily. As to quaternary structure, interacts with ELOVL1 and LASS2. As to expression, expressed in most tissues tested. Highly expressed in the ovary and mammary. Expressed in platelets.

Its subcellular location is the endoplasmic reticulum membrane. The catalysed reaction is a very-long-chain (3R)-3-hydroxyacyl-CoA + NADP(+) = a very-long-chain 3-oxoacyl-CoA + NADPH + H(+). It catalyses the reaction 17beta-estradiol + NAD(+) = estrone + NADH + H(+). It carries out the reaction 17beta-estradiol + NADP(+) = estrone + NADPH + H(+). The enzyme catalyses 3-oxooctadecanoyl-CoA + NADPH + H(+) = (3R)-hydroxyoctadecanoyl-CoA + NADP(+). The catalysed reaction is (7Z,10Z,13Z,16Z)-3-oxodocosatetraenoyl-CoA + NADPH + H(+) = (3R)-hydroxy-(7Z,10Z,13Z,16Z)-docosatetraenoyl-CoA + NADP(+). It catalyses the reaction 3-oxo-(7Z,10Z,13Z,16Z,19Z)-docosapentaenoyl-CoA + NADPH + H(+) = (3R)-hydroxy-(7Z,10Z,13Z,16Z,19Z)-docosapentaenoyl-CoA + NADP(+). It carries out the reaction (8Z,11Z,14Z)-3-oxoeicosatrienoyl-CoA + NADPH + H(+) = (3R)-hydroxy-(8Z,11Z,14Z)-eicosatrienoyl-CoA + NADP(+). It participates in lipid metabolism; fatty acid biosynthesis. Its pathway is steroid biosynthesis; estrogen biosynthesis. Functionally, catalyzes the second of the four reactions of the long-chain fatty acids elongation cycle. This endoplasmic reticulum-bound enzymatic process, allows the addition of two carbons to the chain of long- and very long-chain fatty acids/VLCFAs per cycle. This enzyme has a 3-ketoacyl-CoA reductase activity, reducing 3-ketoacyl-CoA to 3-hydroxyacyl-CoA, within each cycle of fatty acid elongation. Thereby, it may participate in the production of VLCFAs of different chain lengths that are involved in multiple biological processes as precursors of membrane lipids and lipid mediators. May also catalyze the transformation of estrone (E1) into estradiol (E2) and play a role in estrogen formation. The chain is Very-long-chain 3-oxoacyl-CoA reductase from Homo sapiens (Human).